The following is a 2715-amino-acid chain: Teneurin-3 (2715 aa).

2 disordered regions span residues 1 to 38 (MDVK…VPTQ) and 142 to 223 (GRSS…AALP). Residues 1–309 (MDVKERRPYC…KSSKYCSWRC (309 aa)) enclose the Teneurin N-terminal domain. Residues 1–310 (MDVKERRPYC…SSKYCSWRCT (310 aa)) are Cytoplasmic-facing. The span at 142–153 (GRSSCLSSRSNS) shows a compositional bias: low complexity. Residues 159 to 168 (DTEHENRSDS) show a composition bias toward basic and acidic residues. Residues 171-182 (EQPSNNPGQPTL) show a composition bias toward polar residues. The span at 201–213 (TSLNRNSLTNRRN) shows a compositional bias: low complexity. A helical membrane pass occupies residues 311 to 331 (ALCAVGVSVLLAILLSYFIAM). The Extracellular portion of the chain corresponds to 332 to 2715 (HLFGLNWHLQ…FLRQSEIGKR (2384 aa)). N-linked (GlcNAc...) asparagine glycosylation is found at Asn-345, Asn-380, and Asn-419. EGF-like domains follow at residues 514–545 (SVVE…PDCS), 546–576 (RAAC…TECD), 578–610 (PTTQ…ENCE), 611–642 (EADC…SNCE), 644–677 (LKTM…PDCS), 678–709 (NEIC…ACNQ), 710–739 (RACH…EHCT), and 740–783 (IAHY…AGCD). 22 cysteine pairs are disulfide-bonded: Cys-518/Cys-528, Cys-522/Cys-533, Cys-535/Cys-544, Cys-553/Cys-564, Cys-566/Cys-575, Cys-582/Cys-593, Cys-587/Cys-598, Cys-600/Cys-609, Cys-614/Cys-625, Cys-619/Cys-630, Cys-632/Cys-641, Cys-652/Cys-665, Cys-667/Cys-676, Cys-681/Cys-691, Cys-685/Cys-696, Cys-698/Cys-707, Cys-712/Cys-722, Cys-716/Cys-727, Cys-729/Cys-738, Cys-752/Cys-762, Cys-756/Cys-771, and Cys-773/Cys-782. An N-linked (GlcNAc...) asparagine glycan is attached at Asn-670. N-linked (GlcNAc...) asparagine glycans are attached at residues Asn-869 and Asn-892. The stretch at 1181–1209 (LLAPVALACGIDGSLYVGDFNYVRRIFPS) is one NHL 1 repeat. Asn-1211 carries an N-linked (GlcNAc...) asparagine glycan. NHL repeat units lie at residues 1216-1260 (LELR…PKSL), 1286-1330 (ARCG…NGII), 1347-1387 (CDTS…ITEN), 1418-1445 (LESA…INRI), and 1474-1517 (CYQS…VSKN). One copy of the YD 1 repeat lies at 1527-1546 (YEVASPTDQELYIFDINGTH). N-linked (GlcNAc...) asparagine glycosylation is found at Asn-1543 and Asn-1560. 3 YD repeats span residues 1563-1583 (YSND…LRIR), 1626-1645 (YHGN…WTTF), and 1646-1668 (FDYD…TNLH). Residues Asn-1656, Asn-1693, Asn-1751, and Asn-1836 are each glycosylated (N-linked (GlcNAc...) asparagine). YD repeat units lie at residues 1839–1858 (YSST…EKVD), 1880–1898 (YLEK…YIFE), 1899–1919 (YDMW…HTMQ), 1926–1943 (YYRN…IITD), 1944–1965 (YNEE…VLFK), 1966–1983 (YRRQ…TRVS), 1986–2006 (YDET…FICT), 2009–2029 (YRQI…DGMV), 2037–2056 (YDNS…TPLP), 2062–2079 (FDDI…GVIY), 2080–2106 (YDIN…IKEI), 2108–2121 (YEIF…ITIQ), 2122–2145 (YDNM…TKYA), 2148–2168 (YDVD…WRYN), 2169–2189 (YDLN…LTPL), 2191–2211 (YDLR…DEDG), 2223–2243 (YSSK…TVIY), and 2245–2265 (YDGL…LQFF). N-linked (GlcNAc...) asparagine glycosylation occurs at Asn-1937. An N-linked (GlcNAc...) asparagine glycan is attached at Asn-2140. N-linked (GlcNAc...) asparagine glycosylation is present at Asn-2280. Residues 2291–2332 (YDLQGHLFAMEISSGDEFYIASDNTGTPLAVFSSNGLMLKQT) form a YD 23 repeat. Asn-2592 carries an N-linked (GlcNAc...) asparagine glycan.

Belongs to the tenascin family. Teneurin subfamily. As to quaternary structure, homodimer; disulfide-linked; to mediate homophilic cell adhesion. Most isoforms (isoform-type A and type-B) can mediate homophilic interaction. Heterodimer with either TENM1 or TENM2. May also form heterodimer with TENM4. Isoform A0B0: Does not form homodimer to mediate homophilic cell adhesion. Isoform A0B0: Heterodimer with ADGRL3. As to expression, in brain, expressed in highly specific regions of the postnatal brain: expressed in restricted domains of the developing hippocampal region, including proximal CA1, distal subiculum, and medial entorhinal cortex (at protein level). Expression matches with topographic connectivity between entorhinal cortex, CA1, and subiculum (at protein level). Also specifically expressed in subregions of the presubiculum, parasubiculum, medial mammillary nucleus and anteroventral thalamic nucleus that are topographically connected with subiculum or entorhinal cortex (at protein level). Expressed in neurons of the developing visual pathway (at protein level). Expressed in the dorsal and ventral lateral geniculate nucleus (dLGN and vLGN) and optic tract at birth. Expressed in ipsilateral retinal axons of terminal zones (TZs) in the developing superior colliculus (SC) throughout the first postnatal week. Expressed in the layer V of the visual caudal cortex. Expressed in the femoral and mandibular condylar cartilages. Strongly expressed in fibrous and proliferating chondrocytes. Poorly expressed in mature chondrocytes. Not expressed in hypertrophic chondrocytes.

The protein resides in the cell membrane. It localises to the cell projection. The protein localises to the axon. Its function is as follows. Involved in neural development by regulating the establishment of proper connectivity within the nervous system. Acts in both pre- and postsynaptic neurons in the hippocampus to control the assembly of a precise topographic projection: required in both CA1 and subicular neurons for the precise targeting of proximal CA1 axons to distal subiculum, probably by promoting homophilic cell adhesion. Promotes homophilic adhesion in a splicing isoform-dependent manner: most isoforms (isoform-type A and type-B) can mediate homophilic interaction. Promotes axon guidance. Required for proper dendrite morphogenesis and axon targeting in the vertebrate visual system, thereby playing a key role in the development of the visual pathway. Regulates the formation in ipsilateral retinal mapping to both the dorsal lateral geniculate nucleus (dLGN) and the superior colliculus (SC). May also be involved in the differentiation of the fibroblast-like cells in the superficial layer of mandibular condylar cartilage into chondrocytes. The polypeptide is Teneurin-3 (Mus musculus (Mouse)).